A 1535-amino-acid chain; its full sequence is CLIP-associating protein 1 (1535 aa).

HEAT repeat units follow at residues 87-124 (AQIG…QAAN) and 163-200 (LTLS…HVGE). The tract at residues 237–290 (NEKNFDDEDSVDGNRPSSASSSSSKAPSSSRRNVNLGTTRRLMSSSLGSKSSAA) is disordered. The residue at position 246 (Ser-246) is a Phosphoserine. The segment covering 252-266 (PSSASSSSSKAPSSS) has biased composition (low complexity). Polar residues predominate over residues 267-279 (RRNVNLGTTRRLM). Residues 280-290 (SSSLGSKSSAA) show a composition bias toward low complexity. HEAT repeat units follow at residues 405–440 (HGAE…IRHT) and 441–477 (HIPR…EWQT). Disordered stretches follow at residues 543-600 (SDSI…RSRS) and 612-782 (SKVS…GRIP). Phosphoserine occurs at positions 545, 548, 558, 559, and 568. The span at 548-567 (SLPQSDRSSSSSQESLNRPL) shows a compositional bias: low complexity. Residues 579–594 (SRGSTVSTKSVSTTGS) show a composition bias toward low complexity. A Phosphoserine modification is found at Ser-600. Residues 612–633 (SKVSSSSGSPAFSSAAALPPGS) show a composition bias toward low complexity. Phosphoserine occurs at positions 636, 646, 647, and 649. The segment covering 645–658 (QSSGSTTNVASTPD) has biased composition (polar residues). A Phosphothreonine modification is found at Thr-656. Residues 662–782 (RSRAKVVSQS…FGLGQSGRIP (121 aa)) are interaction with microtubules, MAPRE1 and MAPRE3. Over residues 673–695 (RSRSANPAGAGSRSSSPGKLLGS) the composition is skewed to low complexity. Phosphoserine is present on residues Ser-684, Ser-688, Ser-695, and Ser-702. Thr-708 carries the phosphothreonine modification. The residue at position 711 (Ser-711) is a Phosphoserine. Positions 721–730 (QGCSRETSPN) are enriched in polar residues. Phosphoserine is present on residues Ser-784, Ser-794, and Ser-820. An HEAT 5 repeat occupies 971-1008 (QQFNILMRFIVDQTQTPNLKVKVAILKYIESLARQMDP). Residues 1078–1157 (LKNSSNTGVG…APSHKTLRRS (80 aa)) form a disordered region. Polar residues predominate over residues 1079 to 1094 (KNSSNTGVGSPSNTIG). Ser-1088 is subject to Phosphoserine. Phosphothreonine is present on residues Thr-1092 and Thr-1096. Low complexity predominate over residues 1103 to 1112 (SRTSPLTSPT). Residues Ser-1110, Phe-1139, and Ser-1193 each carry the phosphoserine modification. Basic and acidic residues predominate over residues 1200–1213 (PIKRDGKKDCDIVS). Disordered regions lie at residues 1200-1233 (PIKR…EIEG) and 1245-1266 (LNTQ…PYPY). Residue Ser-1220 is modified to Phosphoserine. Positions 1251-1535 (RAFPGPRARE…SSSSDVSTHS (285 aa)) are interaction with CLIP2 and RSN. The interval 1251-1535 (RAFPGPRARE…SSSSDVSTHS (285 aa)) is interaction with PHLDB2. Positions 1253 to 1535 (FPGPRAREYN…SSSSDVSTHS (283 aa)) are localization to kinetochores. A coiled-coil region spans residues 1296–1327 (DHSDLVADLLKELSNHNERVEERKGALLELLK). HEAT repeat units follow at residues 1339–1376 (EHFK…NQPA) and 1457–1494 (QLLV…VIGE).

This sequence belongs to the CLASP family. Interacts with ERC1, MAPRE1, MAPRE3, microtubules, and PHLDB2. The interaction with ERC1 may be mediated by PHLDB2. Interacts with GCC2; recruits CLASP1 to Golgi membranes. Interacts with CLIP2 and RSN. Interacts with MACF1. Interacts with mtcl2 and MTCL1. In terms of tissue distribution, highly expressed in brain and heart and at lower levels in kidney, lung, skeletal muscle and testis.

It is found in the cytoplasm. Its subcellular location is the cytoskeleton. The protein localises to the microtubule organizing center. It localises to the centrosome. The protein resides in the chromosome. It is found in the centromere. Its subcellular location is the kinetochore. The protein localises to the spindle. It localises to the golgi apparatus. The protein resides in the trans-Golgi network. Its function is as follows. Microtubule plus-end tracking protein that promotes the stabilization of dynamic microtubules. Involved in the nucleation of noncentrosomal microtubules originating from the trans-Golgi network (TGN). Required for the polarization of the cytoplasmic microtubule arrays in migrating cells towards the leading edge of the cell. May act at the cell cortex to enhance the frequency of rescue of depolymerizing microtubules by attaching their plus-ends to cortical platforms composed of ERC1 and PHLDB2. This cortical microtubule stabilizing activity is regulated at least in part by phosphatidylinositol 3-kinase signaling. Also performs a similar stabilizing function at the kinetochore which is essential for the bipolar alignment of chromosomes on the mitotic spindle. The sequence is that of CLIP-associating protein 1 (Clasp1) from Mus musculus (Mouse).